We begin with the raw amino-acid sequence, 279 residues long: Shikimate dehydrogenase (NADP(+)) (279 aa).

Shikimate is bound by residues 20 to 22 and Thr67; that span reads SRS. The Proton acceptor role is filled by Lys71. Asp83 contributes to the NADP(+) binding site. Shikimate-binding residues include Asn92 and Asp108. NADP(+)-binding positions include 134–138 and Leu223; that span reads GAGGA. Tyr225 serves as a coordination point for shikimate. Gly246 contacts NADP(+).

It belongs to the shikimate dehydrogenase family. Homodimer.

It carries out the reaction shikimate + NADP(+) = 3-dehydroshikimate + NADPH + H(+). Its pathway is metabolic intermediate biosynthesis; chorismate biosynthesis; chorismate from D-erythrose 4-phosphate and phosphoenolpyruvate: step 4/7. Its function is as follows. Involved in the biosynthesis of the chorismate, which leads to the biosynthesis of aromatic amino acids. Catalyzes the reversible NADPH linked reduction of 3-dehydroshikimate (DHSA) to yield shikimate (SA). The chain is Shikimate dehydrogenase (NADP(+)) from Cereibacter sphaeroides (strain KD131 / KCTC 12085) (Rhodobacter sphaeroides).